The primary structure comprises 724 residues: 1,4-alpha-glucan branching enzyme GlgB 1 (724 aa).

Catalysis depends on D403, which acts as the Nucleophile. E456 acts as the Proton donor in catalysis.

Belongs to the glycosyl hydrolase 13 family. GlgB subfamily. As to quaternary structure, monomer.

It catalyses the reaction Transfers a segment of a (1-&gt;4)-alpha-D-glucan chain to a primary hydroxy group in a similar glucan chain.. It participates in glycan biosynthesis; glycogen biosynthesis. Its function is as follows. Catalyzes the formation of the alpha-1,6-glucosidic linkages in glycogen by scission of a 1,4-alpha-linked oligosaccharide from growing alpha-1,4-glucan chains and the subsequent attachment of the oligosaccharide to the alpha-1,6 position. This is 1,4-alpha-glucan branching enzyme GlgB 1 (glgB1) from Xanthomonas axonopodis pv. citri (strain 306).